The chain runs to 806 residues: Putative phage-related protein YobO (806 aa).

A disordered region spans residues 1-23 (MVHFKNCPDPSLNANSQSHPEFS). Residues 12-21 (LNANSQSHPE) are compositionally biased toward polar residues. PbH1 repeat units lie at residues 199 to 221 (VEYG…DITS), 237 to 259 (SRYI…TTHY), 260 to 292 (SEYI…EIDD), 294 to 315 (SRHV…EVKA), 419 to 441 (SQNI…DINL), and 448 to 470 (TDYI…SIGG).

This chain is Putative phage-related protein YobO (yobO), found in Bacillus subtilis (strain 168).